Reading from the N-terminus, the 235-residue chain is Cobalt transport protein CbiM (235 aa).

6 consecutive transmembrane segments (helical) span residues 6-26 (GVLP…FVVH), 43-63 (LLLA…LPSV), 85-105 (MAFM…HGGI), 108-128 (LGAN…GAYV), 133-153 (LGGP…LSTY), and 181-201 (IFAI…ILLF).

This sequence belongs to the CbiM family. In terms of assembly, forms an energy-coupling factor (ECF) transporter complex composed of an ATP-binding protein (A component, CbiO), a transmembrane protein (T component, CbiQ) and 2 possible substrate-capture proteins (S components, CbiM and CbiN) of unknown stoichimetry.

It is found in the cell membrane. The protein operates within cofactor biosynthesis; adenosylcobalamin biosynthesis. Part of the energy-coupling factor (ECF) transporter complex CbiMNOQ involved in cobalt import. The polypeptide is Cobalt transport protein CbiM (Propionibacterium freudenreichii subsp. shermanii (strain ATCC 9614 / DSM 4902 / CIP 103027 / NCIMB 8099 / CIRM-BIA1)).